Consider the following 152-residue polypeptide: Deoxyuridine 5'-triphosphate nucleotidohydrolase (152 aa).

Residues 71–73 (RSG), N84, 88–90 (LID), and M98 contribute to the substrate site.

Belongs to the dUTPase family. Mg(2+) is required as a cofactor.

It catalyses the reaction dUTP + H2O = dUMP + diphosphate + H(+). Its pathway is pyrimidine metabolism; dUMP biosynthesis; dUMP from dCTP (dUTP route): step 2/2. Functionally, this enzyme is involved in nucleotide metabolism: it produces dUMP, the immediate precursor of thymidine nucleotides and it decreases the intracellular concentration of dUTP so that uracil cannot be incorporated into DNA. The sequence is that of Deoxyuridine 5'-triphosphate nucleotidohydrolase from Shewanella denitrificans (strain OS217 / ATCC BAA-1090 / DSM 15013).